Reading from the N-terminus, the 307-residue chain is Protein FAM76A (307 aa).

2 disordered regions span residues S161 to Q181 and K287 to P307. The stretch at I217 to K297 forms a coiled coil.

Belongs to the FAM76 family.

In Gallus gallus (Chicken), this protein is Protein FAM76A (FAM76A).